We begin with the raw amino-acid sequence, 407 residues long: Imidazolonepropionase (407 aa).

H68 and H70 together coordinate Fe(3+). The Zn(2+) site is built by H68 and H70. 3 residues coordinate 4-imidazolone-5-propanoate: R77, Y140, and H173. Position 140 (Y140) interacts with N-formimidoyl-L-glutamate. H238 contributes to the Fe(3+) binding site. Residue H238 participates in Zn(2+) binding. Residue Q241 coordinates 4-imidazolone-5-propanoate. A Fe(3+)-binding site is contributed by D313. Position 313 (D313) interacts with Zn(2+). N315 and G317 together coordinate N-formimidoyl-L-glutamate. T318 provides a ligand contact to 4-imidazolone-5-propanoate.

It belongs to the metallo-dependent hydrolases superfamily. HutI family. Zn(2+) serves as cofactor. Fe(3+) is required as a cofactor.

The protein resides in the cytoplasm. It carries out the reaction 4-imidazolone-5-propanoate + H2O = N-formimidoyl-L-glutamate. It functions in the pathway amino-acid degradation; L-histidine degradation into L-glutamate; N-formimidoyl-L-glutamate from L-histidine: step 3/3. Its function is as follows. Catalyzes the hydrolytic cleavage of the carbon-nitrogen bond in imidazolone-5-propanoate to yield N-formimidoyl-L-glutamate. It is the third step in the universal histidine degradation pathway. This chain is Imidazolonepropionase, found in Burkholderia ambifaria (strain MC40-6).